Consider the following 202-residue polypeptide: MSRYTGSIYKKSRRLGFSLLENNKEFNSGKKRTYGPGQHGNKKVKLSNYGQQLVEKQKLMFLYGLNDRQFRRLYRVALGRPGVLTLNLLQVLESRLDSLVYRAGFAPTRRAARQLVNHSHVLVNGKKVNIPSALVEVGSTIALKEKSLEMPLIKNTLNKPADFIELVDKDKKVAKLSRLPERSELPADVNEAYVVEWYNRLM.

One can recognise an S4 RNA-binding domain in the interval 94-157 (SRLDSLVYRA…LEMPLIKNTL (64 aa)).

Belongs to the universal ribosomal protein uS4 family. As to quaternary structure, part of the 30S ribosomal subunit. Contacts protein S5. The interaction surface between S4 and S5 is involved in control of translational fidelity.

One of the primary rRNA binding proteins, it binds directly to 16S rRNA where it nucleates assembly of the body of the 30S subunit. Its function is as follows. With S5 and S12 plays an important role in translational accuracy. The sequence is that of Small ribosomal subunit protein uS4 from Ureaplasma urealyticum serovar 10 (strain ATCC 33699 / Western).